The primary structure comprises 312 residues: Olfactory receptor 5p57 (312 aa).

Residues 1-25 (MEPGNYTVVTEFILLGLTDDITVSV) are Extracellular-facing. Asn-5 carries N-linked (GlcNAc...) asparagine glycosylation. A helical membrane pass occupies residues 26 to 46 (ILFVMFLIVYSVTLMGNLNII). The Cytoplasmic segment spans residues 47 to 54 (VLIRTSPQ). A helical transmembrane segment spans residues 55-75 (LHTPMYLFLSHLAFLDIGYSS). At 76-99 (SVTPIMLRGFLRKGTFIPVAGCVA) the chain is on the extracellular side. A disulfide bond links Cys-97 and Cys-189. A helical membrane pass occupies residues 100–120 (QLCIVVAFGTSESFLLASMAY). Topologically, residues 121-133 (DRYVAICSPLLYS) are cytoplasmic. A helical membrane pass occupies residues 134 to 154 (TQMSSTVCILLVGTSYLGGWV). At 155–196 (NAWIFTGCSLNLSFCGPNKINHFFCDYSPLLKLSCSHDFSFE) the chain is on the extracellular side. Asn-165 carries an N-linked (GlcNAc...) asparagine glycan. The helical transmembrane segment at 197–217 (VIPAISSGSIIVVTVFIIALS) threads the bilayer. At 218 to 237 (YVYILVSILKMRSTEGRQKA) the chain is on the cytoplasmic side. A helical transmembrane segment spans residues 238–258 (FSTCTSHLTAVTLFFGTITFI). The Extracellular portion of the chain corresponds to 259-271 (YVMPQSSYSTDQN). A helical transmembrane segment spans residues 272 to 292 (KVVSVFYTVVIPMLNPLIYSF). Residues 293–312 (RNKEVKEAMKKLIAKTHWWS) lie on the Cytoplasmic side of the membrane.

Belongs to the G-protein coupled receptor 1 family.

Its subcellular location is the cell membrane. Its function is as follows. Probable odorant receptor, which recognizes only aliphatic alcohols, suggesting that it may convey a 'woody' or 'sweet' sour. The protein is Olfactory receptor 5p57 of Mus musculus (Mouse).